The following is a 427-amino-acid chain: Flavohemoprotein (427 aa).

Residues 30 to 168 (ELNESQKQYI…LAKILIDSEK (139 aa)) form the Globin domain. His-114 provides a ligand contact to heme b. Catalysis depends on charge relay system residues Tyr-124 and Glu-167. The segment at 176–427 (WNGFVEFKVT…QSEFFGPYIP (252 aa)) is reductase. The FAD-binding FR-type domain maps to 177–285 (NGFVEFKVTE…SPPAGNFVYK (109 aa)). Residues Tyr-216 and 232 to 235 (REYS) each bind FAD. Residue 301–306 (GIGITP) participates in NADP(+) binding. 421-424 (FFGP) is a binding site for FAD.

It belongs to the globin family. Two-domain flavohemoproteins subfamily. The protein in the C-terminal section; belongs to the flavoprotein pyridine nucleotide cytochrome reductase family. FAD is required as a cofactor. It depends on heme b as a cofactor.

The protein localises to the cytoplasm. The protein resides in the nucleus. It catalyses the reaction 2 nitric oxide + NADPH + 2 O2 = 2 nitrate + NADP(+) + H(+). The catalysed reaction is 2 nitric oxide + NADH + 2 O2 = 2 nitrate + NAD(+) + H(+). Is involved in NO detoxification in an aerobic process, termed nitric oxide dioxygenase (NOD) reaction that utilizes O(2) and NAD(P)H to convert NO to nitrate, which protects the fungus from various noxious nitrogen compounds. Therefore, plays a central role in the inducible response to nitrosative stress. Its function is as follows. In the presence of oxygen and NADH, it has NADH oxidase activity, which leads to the generation of superoxide and H(2)O(2). Under anaerobic conditions, it also exhibits nitric oxide reductase and FAD reductase activities. However, all these reactions are much lower than NOD activity. The chain is Flavohemoprotein from Schizosaccharomyces pombe (strain 972 / ATCC 24843) (Fission yeast).